The primary structure comprises 334 residues: D-fructose 1,6-bisphosphatase class 2/sedoheptulose 1,7-bisphosphatase (334 aa).

Residues D33, E57, D85, and E88 each coordinate Mn(2+). Substrate-binding positions include 88-90 (EGT), Y119, 164-166 (RAR), and 186-188 (DGD). E213 serves as a coordination point for Mn(2+).

The protein belongs to the FBPase class 2 family. Homotetramer. Mn(2+) serves as cofactor.

It carries out the reaction beta-D-fructose 1,6-bisphosphate + H2O = beta-D-fructose 6-phosphate + phosphate. The enzyme catalyses D-sedoheptulose 1,7-bisphosphate + H2O = D-sedoheptulose 7-phosphate + phosphate. Its pathway is carbohydrate biosynthesis; Calvin cycle. In terms of biological role, catalyzes the hydrolysis of fructose 1,6-bisphosphate (Fru 1,6-P2) and sedoheptulose 1,7-bisphosphate (Sed 1,7-P2) to fructose 6-phosphate and sedoheptulose 7-phosphate, respectively. The chain is D-fructose 1,6-bisphosphatase class 2/sedoheptulose 1,7-bisphosphatase from Synechococcus sp. (strain CC9311).